A 65-amino-acid polypeptide reads, in one-letter code: Large ribosomal subunit protein bL35 (65 aa).

This sequence belongs to the bacterial ribosomal protein bL35 family.

The protein is Large ribosomal subunit protein bL35 of Paraburkholderia phytofirmans (strain DSM 17436 / LMG 22146 / PsJN) (Burkholderia phytofirmans).